Reading from the N-terminus, the 326-residue chain is D-amino-acid oxidase (326 aa).

FAD contacts are provided by G14, V15, I16, D36, S44, A48, A49, I50, and V157. D-proline contacts are provided by Y219 and R274. D-serine contacts are provided by Y219 and R274. Residues R274, G299, G300, G302, and T304 each coordinate FAD. Position 300 (G300) interacts with D-proline. G300 contacts D-serine.

This sequence belongs to the DAMOX/DASOX family. As to quaternary structure, homodimer. It depends on FAD as a cofactor.

It is found in the cytoplasm. Its subcellular location is the secreted. The protein resides in the cell wall. The enzyme catalyses a D-alpha-amino acid + O2 + H2O = a 2-oxocarboxylate + H2O2 + NH4(+). It catalyses the reaction D-phenylalanine + O2 + H2O = 3-phenylpyruvate + H2O2 + NH4(+). It carries out the reaction D-lysine + O2 + H2O = 6-amino-2-oxohexanoate + H2O2 + NH4(+). The catalysed reaction is D-methionine + O2 + H2O = 4-methylsulfanyl-2-oxobutanoate + H2O2 + NH4(+). The enzyme catalyses D-arginine + O2 + H2O = 5-guanidino-2-oxopentanoate + H2O2 + NH4(+). It catalyses the reaction D-ornithine + O2 + H2O = 5-amino-2-oxopentanoate + H2O2 + NH4(+). It carries out the reaction D-leucine + O2 + H2O = 4-methyl-2-oxopentanoate + H2O2 + NH4(+). The catalysed reaction is D-alanine + O2 + H2O = pyruvate + H2O2 + NH4(+). The enzyme catalyses D-valine + O2 + H2O = 3-methyl-2-oxobutanoate + H2O2 + NH4(+). It catalyses the reaction D-histidine + O2 + H2O = 3-(imidazol-5-yl)pyruvate + H2O2 + NH4(+). Functionally, catalyzes the oxidative deamination of D-amino acids with broad substrate specificity. The protein is D-amino-acid oxidase of Glutamicibacter protophormiae (Brevibacterium protophormiae).